The following is a 161-amino-acid chain: Large ribosomal subunit protein uL15 (161 aa).

Residues Met-1–Glu-50 are disordered. The span at Arg-21–Gly-37 shows a compositional bias: gly residues.

It belongs to the universal ribosomal protein uL15 family. As to quaternary structure, part of the 50S ribosomal subunit.

Functionally, binds to the 23S rRNA. This is Large ribosomal subunit protein uL15 from Nitrobacter winogradskyi (strain ATCC 25391 / DSM 10237 / CIP 104748 / NCIMB 11846 / Nb-255).